Reading from the N-terminus, the 465-residue chain is UDP-N-acetylmuramate--L-alanine ligase (465 aa).

112-118 (GTHGKTT) contributes to the ATP binding site.

This sequence belongs to the MurCDEF family.

The protein localises to the cytoplasm. It carries out the reaction UDP-N-acetyl-alpha-D-muramate + L-alanine + ATP = UDP-N-acetyl-alpha-D-muramoyl-L-alanine + ADP + phosphate + H(+). Its pathway is cell wall biogenesis; peptidoglycan biosynthesis. Its function is as follows. Cell wall formation. The sequence is that of UDP-N-acetylmuramate--L-alanine ligase from Burkholderia orbicola (strain MC0-3).